A 1347-amino-acid chain; its full sequence is Spermatogenesis-associated protein 31A3 (1347 aa).

The chain crosses the membrane as a helical span at residues 23-43 (PWVLDIFLTLVFALGFFFLLL). Disordered stretches follow at residues 55 to 87 (PSPS…GREC), 108 to 142 (HLDK…HEPM), 154 to 235 (SPDP…STLI), 373 to 397 (EQDT…GPQK), 627 to 658 (QDES…EAQK), 900 to 955 (RGIP…REAV), 1084 to 1161 (VHEE…PSVS), and 1313 to 1335 (KAVS…SHHH). Positions 60–82 (GKRKCPVGRRRRPRGRMKNHSLR) are enriched in basic residues. Over residues 165 to 178 (LASTPSPGPMTTSV) the composition is skewed to polar residues. The span at 198 to 211 (PEPPALFPHPPHTP) shows a compositional bias: pro residues. Polar residues-rich tracts occupy residues 627–651 (QDES…STGE) and 927–948 (LTYS…SSKA). 2 stretches are compositionally biased toward basic and acidic residues: residues 1108–1127 (HKSE…RLEG) and 1137–1146 (RKTEDTHQDE).

Belongs to the SPATA31 family.

The protein localises to the membrane. In terms of biological role, may play a role in spermatogenesis. In Homo sapiens (Human), this protein is Spermatogenesis-associated protein 31A3 (SPATA31A3).